Consider the following 1987-residue polypeptide: Transcriptional activator DEMETER (1987 aa).

Disordered regions lie at residues 246–378, 392–415, and 793–901; these read TGHE…NKSP, DLENPGDARQGDSESEIVQNSSGA, and MPPE…GPSG. Positions 258–277 are enriched in polar residues; that stretch reads SMQSIMDSSAVNATEATEQN. The segment covering 341–364 has biased composition (basic and acidic residues); sequence ATQEKVKSKETGSAKKKNLKESAT. Residues 813–829 show a composition bias toward polar residues; that stretch reads NTASISKGASKGNSSPV. Over residues 844 to 855 the composition is skewed to basic residues; it reads PAKKGRAGRKKS. The interval 955–1054 is DEMETER; sequence KVDIDDETTR…AFMSLAARFP (100 aa). Disordered regions lie at residues 1324 to 1351 and 1439 to 1471; these read LPGMGLSGSSSAVQEHQDDTQHNQQDEM and TLADGKKPTSQWDSLRKDVEGNEGRQERNKNNM. 2 stretches are compositionally biased toward basic and acidic residues: residues 1338-1351 and 1452-1469; these read EHQDDTQHNQQDEM and SLRKDVEGNEGRQERNKN. Residues C1629, C1636, C1639, and C1645 each contribute to the [4Fe-4S] cluster site.

The protein belongs to the DNA glycosylase family. DEMETER subfamily. Requires [4Fe-4S] cluster as cofactor. As to expression, mainly expressed in immature flower buds, then decreases as the flower matures. Expressed in the ovule carpels, but not expressed in pollen stamens. Expressed in developing and mature ovules (stages 12-14), then strongly decreases after fertilization.

It localises to the nucleus. In terms of biological role, transcriptional activator involved in gene imprinting. Catalyzes the release of 5-methylcytosine (5-meC) from DNA by a glycosylase/lyase mechanism. Allows the expression of the maternal copy of the imprinted MEA gene before fertilization, possibly by antagonizing or suppressing DNA methylation on target promoter. Probably acts by nicking the MEA promoter. Required for stable reproducible patterns of floral and vegetative development. The protein is Transcriptional activator DEMETER (DME) of Arabidopsis thaliana (Mouse-ear cress).